The sequence spans 564 residues: CTP synthase (564 aa).

An amidoligase domain region spans residues Met1–Leu272. Ser18 serves as a coordination point for CTP. Ser18 is a binding site for UTP. Position 19–24 (Ser19–Ile24) interacts with ATP. Tyr59 is a binding site for L-glutamine. Residue Asp76 participates in ATP binding. 2 residues coordinate Mg(2+): Asp76 and Glu146. Residues Asp153 to Glu155, Lys193 to Gln198, and Lys229 contribute to the CTP site. UTP-binding positions include Lys193–Gln198 and Lys229. Residues Thr299–Gly543 enclose the Glutamine amidotransferase type-1 domain. Gly363 is an L-glutamine binding site. The active-site Nucleophile; for glutamine hydrolysis is Cys390. L-glutamine contacts are provided by residues Leu391–Gln394, Glu414, and Arg471. Residues His516 and Glu518 contribute to the active site.

It belongs to the CTP synthase family. As to quaternary structure, homotetramer.

The catalysed reaction is UTP + L-glutamine + ATP + H2O = CTP + L-glutamate + ADP + phosphate + 2 H(+). The enzyme catalyses L-glutamine + H2O = L-glutamate + NH4(+). It catalyses the reaction UTP + NH4(+) + ATP = CTP + ADP + phosphate + 2 H(+). Its pathway is pyrimidine metabolism; CTP biosynthesis via de novo pathway; CTP from UDP: step 2/2. Allosterically activated by GTP, when glutamine is the substrate; GTP has no effect on the reaction when ammonia is the substrate. The allosteric effector GTP functions by stabilizing the protein conformation that binds the tetrahedral intermediate(s) formed during glutamine hydrolysis. Inhibited by the product CTP, via allosteric rather than competitive inhibition. In terms of biological role, catalyzes the ATP-dependent amination of UTP to CTP with either L-glutamine or ammonia as the source of nitrogen. Regulates intracellular CTP levels through interactions with the four ribonucleotide triphosphates. This Prosthecochloris aestuarii (strain DSM 271 / SK 413) protein is CTP synthase.